Here is a 785-residue protein sequence, read N- to C-terminus: Protein SEY1 (785 aa).

At Met1–Glu690 the chain is on the cytoplasmic side. A GB1/RHD3-type G domain is found at Gly40–Tyr266. A GTP-binding site is contributed by Gly50–Ser57. Positions Pro451–Ile479 form a coiled coil. The chain crosses the membrane as a helical span at residues Val691–Leu711. The Lumenal segment spans residues Arg712–Pro714. A helical transmembrane segment spans residues Leu715–Leu735. Residues Leu736–Asp785 are Cytoplasmic-facing.

Belongs to the TRAFAC class dynamin-like GTPase superfamily. GB1/RHD3 GTPase family. RHD3 subfamily.

Its subcellular location is the endoplasmic reticulum membrane. Functionally, cooperates with the reticulon proteins and tubule-shaping DP1 family proteins to generate and maintain the structure of the tubular endoplasmic reticulum network. Has GTPase activity, which is required for its function in ER organization. The chain is Protein SEY1 from Komagataella phaffii (strain GS115 / ATCC 20864) (Yeast).